The chain runs to 109 residues: Fluoride-specific ion channel FluC (109 aa).

3 helical membrane-spanning segments follow: residues 21–41 (FFLN…GFVI), 52–72 (ILLT…LFLY), and 83–103 (LFFY…AGFL).

This sequence belongs to the fluoride channel Fluc/FEX (TC 1.A.43) family.

Its subcellular location is the cell inner membrane. It carries out the reaction fluoride(in) = fluoride(out). In terms of biological role, fluoride-specific ion channel. Important for reducing fluoride concentration in the cell, thus reducing its toxicity. In Prochlorococcus marinus (strain MIT 9515), this protein is Fluoride-specific ion channel FluC.